The following is a 270-amino-acid chain: Undecaprenyl-diphosphatase (270 aa).

8 helical membrane-spanning segments follow: residues 14–34 (GLTE…PTFL), 40–60 (GITF…LYFW), 88–108 (FYII…ETTI), 117–137 (SLIA…DTSG), 146–166 (ITLK…IPGV), 189–209 (FSFL…LSGL), 221–241 (PLLI…AFLL), and 249–269 (LYPF…FINF).

The protein belongs to the UppP family.

The protein localises to the cell inner membrane. It catalyses the reaction di-trans,octa-cis-undecaprenyl diphosphate + H2O = di-trans,octa-cis-undecaprenyl phosphate + phosphate + H(+). Functionally, catalyzes the dephosphorylation of undecaprenyl diphosphate (UPP). Confers resistance to bacitracin. The chain is Undecaprenyl-diphosphatase from Geotalea daltonii (strain DSM 22248 / JCM 15807 / FRC-32) (Geobacter daltonii).